Consider the following 305-residue polypeptide: UDP-3-O-acyl-N-acetylglucosamine deacetylase (305 aa).

Residues His79, His238, and Asp242 each contribute to the Zn(2+) site. The Proton donor role is filled by His265.

The protein belongs to the LpxC family. Zn(2+) is required as a cofactor.

The enzyme catalyses a UDP-3-O-[(3R)-3-hydroxyacyl]-N-acetyl-alpha-D-glucosamine + H2O = a UDP-3-O-[(3R)-3-hydroxyacyl]-alpha-D-glucosamine + acetate. It participates in glycolipid biosynthesis; lipid IV(A) biosynthesis; lipid IV(A) from (3R)-3-hydroxytetradecanoyl-[acyl-carrier-protein] and UDP-N-acetyl-alpha-D-glucosamine: step 2/6. Catalyzes the hydrolysis of UDP-3-O-myristoyl-N-acetylglucosamine to form UDP-3-O-myristoylglucosamine and acetate, the committed step in lipid A biosynthesis. This is UDP-3-O-acyl-N-acetylglucosamine deacetylase from Escherichia coli O45:K1 (strain S88 / ExPEC).